Here is a 155-residue protein sequence, read N- to C-terminus: FUN14 domain-containing protein 1 (155 aa).

Residues 1–47 (MATRNPPPQEYESDDDSYEVLDLTEYARRHHWWNRVFGHSSGPMVEK) lie on the Cytoplasmic side of the membrane. Phosphoserine occurs at positions 13 and 17. Tyr18 carries the post-translational modification Phosphotyrosine; by SRC. A YXXL motif is present at residues 18–21 (YEVL). A helical transmembrane segment spans residues 48–68 (YSVATQIVMGGVSGWCAGFLF). Residues 69–74 (QKVGKL) are Mitochondrial intermembrane-facing. Residues 75–95 (AATAVGGGFLLLQIASHSGYV) form a helical membrane-spanning segment. At 96–133 (QIDWKRVEKDVNKAKRQIKKRANKAAPEINNIIEEATE) the chain is on the cytoplasmic side. A Glycyl lysine isopeptide (Lys-Gly) (interchain with G-Cter in ubiquitin) cross-link involves residue Lys119. A helical membrane pass occupies residues 134–154 (FVKQNIVISSGFVGGFLLGLA). Ser155 is a topological domain (mitochondrial intermembrane).

Belongs to the FUN14 family. In terms of assembly, interacts (via YXXL motif) with MAP1 LC3 family proteins MAP1LC3A, MAP1LC3B and GABARAP. Interacts with DNM1L/DPR1. Interacts with GPX4. Phosphorylation at Ser-13 by CK2 and at Tyr-18 by SRC inhibits activation of mitophagy. Following hypoxia, dephosphorylated at Tyr-18, leading to interaction with MAP1 LC3 family proteins and triggering mitophagy. Dephosphorylation is mediated by PGAM5. Phosphorylated by ULK1 at Ser-17 which enhances FUNDC1 binding to LC3. Post-translationally, ubiquitinated on Lys-119. Deubiquitinated by USP19; leading to hypoxia-induced DRP1 oligomerization and GTPase activity.

Its subcellular location is the mitochondrion outer membrane. Functionally, integral mitochondrial outer-membrane protein that mediates the formation of mitochondria-associated endoplasmic reticulum membranes (MAMs). In turn, mediates angiogenesis and neoangiogenesis through interference with intracellular Ca(2+) communication and regulation of the vascular endothelial growth factor receptor KDR/VEGFR2 expression at both mRNA and protein levels. Also acts as an activator of hypoxia-induced mitophagy, an important mechanism for mitochondrial quality and homeostasis, by interacting with and recruiting LC3 protein family to mitochondria. Mechanistically, recruits DRP1 at ER-mitochondria contact sites leading to DRP1 oligomerization and GTPase activity to facilitate mitochondrial fission during hypoxia. Additionally, plays a role in hepatic ferroptosis by interacting directly with glutathione peroxidase/GPX4 to facilitate its recruitment into mitochondria through TOM/TIM complex where it is degraded by mitophagy. The chain is FUN14 domain-containing protein 1 (FUNDC1) from Bos taurus (Bovine).